A 158-amino-acid polypeptide reads, in one-letter code: MARGNGIERVVADNRKARHDYFIEETYEAGVVLTGSEIKSIRAGQVNLRGGYVRIVNGEAWLYDVHIAPYEQSGKYFNHEPTRPRKLLLHRREISRIAGQVERQGYTLVPLRLYLRGSRAKVEIGLARGKKLYDKREDIARREARRTIDRALKERARH.

It belongs to the SmpB family.

The protein resides in the cytoplasm. Functionally, required for rescue of stalled ribosomes mediated by trans-translation. Binds to transfer-messenger RNA (tmRNA), required for stable association of tmRNA with ribosomes. tmRNA and SmpB together mimic tRNA shape, replacing the anticodon stem-loop with SmpB. tmRNA is encoded by the ssrA gene; the 2 termini fold to resemble tRNA(Ala) and it encodes a 'tag peptide', a short internal open reading frame. During trans-translation Ala-aminoacylated tmRNA acts like a tRNA, entering the A-site of stalled ribosomes, displacing the stalled mRNA. The ribosome then switches to translate the ORF on the tmRNA; the nascent peptide is terminated with the 'tag peptide' encoded by the tmRNA and targeted for degradation. The ribosome is freed to recommence translation, which seems to be the essential function of trans-translation. The protein is SsrA-binding protein of Roseiflexus castenholzii (strain DSM 13941 / HLO8).